The following is a 349-amino-acid chain: Leukotriene B4 receptor 1 (349 aa).

At 1 to 19 (MNTTSPAAPSSSGVSFISL) the chain is on the extracellular side. N-linked (GlcNAc...) asparagine glycosylation occurs at Asn2. A helical transmembrane segment spans residues 20–42 (LVIIVLSVALAVGLPGNSFVVWS). Residues 43 to 54 (ILAKLRKRSVTA) are Cytoplasmic-facing. Residues 55–75 (LMVLHLALADLAVLLTAPFFL) form a helical membrane-spanning segment. Topologically, residues 76–91 (YSVAQGTWTFGLSSCR) are extracellular. Residues 92-113 (LFHYVCGVSMYASVLLIMTMSL) traverse the membrane as a helical segment. The Cytoplasmic segment spans residues 114–138 (DRSLAVALPFVSQKLRTKAVAWRVL). Residues 139–159 (AGIWVMSVLLATPVLLYRTVH) form a helical membrane-spanning segment. Residues 160–179 (LGLNNRSLTCFLKYPSERHR) are Extracellular-facing. An N-linked (GlcNAc...) asparagine glycan is attached at Asn164. The helical transmembrane segment at 180–200 (AFHLFFEVITGFLLPFLVVVA) threads the bilayer. Over 201–222 (SYCDIGRRLRARRFRRSRRTGR) the chain is Cytoplasmic. A helical membrane pass occupies residues 223-243 (LVALIILAFAAFWLPYHVVNL). Topologically, residues 244 to 269 (AEGFRAAAGKALGSGPVGRRLLLARH) are extracellular. The chain crosses the membrane as a helical span at residues 270–290 (VLITLAFLSSSVNPLLYACAG). Residues 291-349 (GGLLRSAGVGFIAKLLEGTGSETSSSRRKGTLAQTLRGTPASPEPDPAESLTASTNPLE) are Cytoplasmic-facing. A disordered region spans residues 311-349 (SETSSSRRKGTLAQTLRGTPASPEPDPAESLTASTNPLE).

It belongs to the G-protein coupled receptor 1 family. Phosphorylated by GRK6 upon leukotriene B4 binding; which promotes desensitization.

It localises to the cell membrane. Receptor for extracellular ATP &gt; UTP and ADP. The activity of this receptor is mediated by G proteins which activate a phosphatidylinositol-calcium second messenger system. May be the cardiac P2Y receptor involved in the regulation of cardiac muscle contraction through modulation of L-type calcium currents. Is a receptor for leukotriene B4, a potent chemoattractant involved in inflammation and immune response. This chain is Leukotriene B4 receptor 1 (LTB4R), found in Bos taurus (Bovine).